The sequence spans 548 residues: Chaperonin GroEL (548 aa).

ATP contacts are provided by residues 30-33 (TLGP), K51, 87-91 (DGTTT), G415, 479-481 (NAA), and D495.

This sequence belongs to the chaperonin (HSP60) family. Forms a cylinder of 14 subunits composed of two heptameric rings stacked back-to-back. Interacts with the co-chaperonin GroES.

Its subcellular location is the cytoplasm. It carries out the reaction ATP + H2O + a folded polypeptide = ADP + phosphate + an unfolded polypeptide.. Functionally, together with its co-chaperonin GroES, plays an essential role in assisting protein folding. The GroEL-GroES system forms a nano-cage that allows encapsulation of the non-native substrate proteins and provides a physical environment optimized to promote and accelerate protein folding. The polypeptide is Chaperonin GroEL (Lawsonia intracellularis (strain PHE/MN1-00)).